The sequence spans 76 residues: Cytochrome c oxidase subunit 6C-1 (76 aa).

Residues 4–14 (GALLPKPQMHD) are Mitochondrial matrix-facing. A helical membrane pass occupies residues 15–55 (PLSKRLWVHIVGAFIVDLGVAAAHKFGAAKPRKKAYADFYR). At 56 to 76 (NHDPMKDFDEMRKAGVFRSVK) the chain is on the mitochondrial intermembrane side.

It belongs to the cytochrome c oxidase subunit 6c family. As to quaternary structure, component of the cytochrome c oxidase (complex IV, CIV), a multisubunit enzyme composed of 14 subunits. The complex is composed of a catalytic core of 3 subunits MT-CO1, MT-CO2 and MT-CO3, encoded in the mitochondrial DNA, and 11 supernumerary subunits COX4I, COX5A, COX5B, COX6A, COX6B, COX6C, COX7A, COX7B, COX7C, COX8 and NDUFA4, which are encoded in the nuclear genome. The complex exists as a monomer or a dimer and forms supercomplexes (SCs) in the inner mitochondrial membrane with NADH-ubiquinone oxidoreductase (complex I, CI) and ubiquinol-cytochrome c oxidoreductase (cytochrome b-c1 complex, complex III, CIII), resulting in different assemblies (supercomplex SCI(1)III(2)IV(1) and megacomplex MCI(2)III(2)IV(2)).

Its subcellular location is the mitochondrion inner membrane. It functions in the pathway energy metabolism; oxidative phosphorylation. In terms of biological role, component of the cytochrome c oxidase, the last enzyme in the mitochondrial electron transport chain which drives oxidative phosphorylation. The respiratory chain contains 3 multisubunit complexes succinate dehydrogenase (complex II, CII), ubiquinol-cytochrome c oxidoreductase (cytochrome b-c1 complex, complex III, CIII) and cytochrome c oxidase (complex IV, CIV), that cooperate to transfer electrons derived from NADH and succinate to molecular oxygen, creating an electrochemical gradient over the inner membrane that drives transmembrane transport and the ATP synthase. Cytochrome c oxidase is the component of the respiratory chain that catalyzes the reduction of oxygen to water. Electrons originating from reduced cytochrome c in the intermembrane space (IMS) are transferred via the dinuclear copper A center (CU(A)) of subunit 2 and heme A of subunit 1 to the active site in subunit 1, a binuclear center (BNC) formed by heme A3 and copper B (CU(B)). The BNC reduces molecular oxygen to 2 water molecules using 4 electrons from cytochrome c in the IMS and 4 protons from the mitochondrial matrix. The chain is Cytochrome c oxidase subunit 6C-1 (Cox6c1) from Rattus norvegicus (Rat).